Consider the following 434-residue polypeptide: Na(+)/H(+) antiporter NhaA 1 (434 aa).

A compositionally biased stretch (pro residues) spans 1-15 (MISPNPALPTPPHAP). A disordered region spans residues 1–21 (MISPNPALPTPPHAPTAPGRG). 12 helical membrane-spanning segments follow: residues 34–54 (GGIL…SPAA), 74–94 (LSVS…VVGL), 112–132 (ALPI…FTLI), 143–163 (GWAI…AVVG), 173–193 (FLLT…AVFY), 196–216 (GIAF…GILV), 222–242 (AWYV…ASGI), 245–265 (TIAG…RAGV), 294–314 (IAVP…LEGL), 326–346 (IIVA…LLVA), 362–382 (VLGL…VGEL), and 393–413 (AVKV…GTLL).

It belongs to the NhaA Na(+)/H(+) (TC 2.A.33) antiporter family.

It localises to the cell membrane. It carries out the reaction Na(+)(in) + 2 H(+)(out) = Na(+)(out) + 2 H(+)(in). Its function is as follows. Na(+)/H(+) antiporter that extrudes sodium in exchange for external protons. This Clavibacter michiganensis subsp. michiganensis (strain NCPPB 382) protein is Na(+)/H(+) antiporter NhaA 1.